A 484-amino-acid polypeptide reads, in one-letter code: MLRISIDSIKQFGSFVPGYNNTSYHAAGRAIRTSSLYSTMISANPRRCLHSSKLLNKEGQEEGYNEQLISKMSSQNGSNSRQNESEGKKEGKASSVKSLLQHTHSHSHTHMHDNPLLSLNVQQIKKNPGVRITWIGLASNVGMAVGKFVGGITFHSQALLADSVHALSDLVSDFLTLFSVQYASRKPTSEYPYGYGKVETVGSLAVSTILAMAGISIGWSSLCAIVGPVIPHAILESMAGLIGETHSHSQSLTQQATNVNAVWIAAGSILVKEWVFQATKKVAIQTNSNVLMANAWHHRVDSLTSLVALVAITSSYFFNIQSLDNLGGLVVSGLIIKTGGQGILSSLKELVDQSIPPTDPRYLEIESVIKDSIGSLKTDLDLKQSLHVRDLTILASGPNLRATTTLEVPVLHSGQEVGIRFLENAISTIREDLRMKVPNVGKVDVEFVDVTSDSKGDLEHSHDTKSTNHTHTHSDSADTHTHKH.

The transit peptide at 1-56 (MLRISIDSIKQFGSFVPGYNNTSYHAAGRAIRTSSLYSTMISANPRRCLHSSKLLN) directs the protein to the mitochondrion. Residues 73 to 82 (SSQNGSNSRQ) show a composition bias toward polar residues. Positions 73-114 (SSQNGSNSRQNESEGKKEGKASSVKSLLQHTHSHSHTHMHDN) are disordered. Residues 83 to 92 (NESEGKKEGK) show a composition bias toward basic and acidic residues. Helical transmembrane passes span 132–152 (ITWI…VGGI), 158–178 (ALLA…LTLF), 209–229 (ILAM…VGPV), 256–276 (ATNV…EWVF), and 316–336 (YFFN…GLII). Residues 453 to 484 (DSKGDLEHSHDTKSTNHTHTHSDSADTHTHKH) form a disordered region.

It belongs to the cation diffusion facilitator (CDF) transporter (TC 2.A.4) family. SLC30A subfamily.

The protein resides in the mitochondrion membrane. In terms of biological role, mitochondrial metal transporter involved in mitochondrial iron accumulation. This Saccharomyces cerevisiae (strain ATCC 204508 / S288c) (Baker's yeast) protein is Mitochondrial metal transporter 2 (MMT2).